The primary structure comprises 440 residues: 5-hydroxytryptamine receptor 6 (440 aa).

Over methionine 1–glycine 27 the chain is Extracellular. A glycan (N-linked (GlcNAc...) asparagine) is linked at asparagine 9. Residues tryptophan 28–cysteine 52 traverse the membrane as a helical segment. At threonine 53 to asparagine 62 the chain is on the cytoplasmic side. A helical membrane pass occupies residues phenylalanine 63–leucine 88. Topologically, residues tyrosine 89–arginine 96 are extracellular. Residues glycine 97 to leucine 122 traverse the membrane as a helical segment. Residues cysteine 99 and cysteine 180 are joined by a disulfide bond. Aspartate 106 serves as a coordination point for serotonin. At aspartate 123 to arginine 142 the chain is on the cytoplasmic side. Residues alanine 143–histidine 167 form a helical membrane-spanning segment. At glutamate 168–serine 185 the chain is on the extracellular side. The chain crosses the membrane as a helical span at residues leucine 186–cysteine 209. The Cytoplasmic segment spans residues arginine 210–alanine 268. Residues serine 269–valine 295 traverse the membrane as a helical segment. The Extracellular segment spans residues cysteine 296–proline 301. Residues glycine 302–phenylalanine 325 form a helical membrane-spanning segment. Over methionine 326–asparagine 440 the chain is Cytoplasmic.

This sequence belongs to the G-protein coupled receptor 1 family. Interacts with CDK5. Interacts with MTOR. Interacts with RPTOR and NF1.

It is found in the cell membrane. In terms of biological role, G-protein coupled receptor for 5-hydroxytryptamine (serotonin), a biogenic hormone that functions as a neurotransmitter, a hormone and a mitogen. Also has a high affinity for tricyclic psychotropic drugs. Ligand binding causes a conformation change that triggers signaling via guanine nucleotide-binding proteins (G proteins) and modulates the activity of downstream effectors. HTR6 is coupled to G(s) G alpha proteins and mediates activation of adenylate cyclase activity. Controls pyramidal neurons migration during corticogenesis, through the regulation of CDK5 activity. Is an activator of mTOR signaling. This chain is 5-hydroxytryptamine receptor 6, found in Mus musculus (Mouse).